Reading from the N-terminus, the 396-residue chain is NADH-quinone oxidoreductase subunit D (396 aa).

This sequence belongs to the complex I 49 kDa subunit family. As to quaternary structure, NDH-1 is composed of 14 different subunits. Subunits NuoB, C, D, E, F, and G constitute the peripheral sector of the complex.

The protein resides in the cell inner membrane. It carries out the reaction a quinone + NADH + 5 H(+)(in) = a quinol + NAD(+) + 4 H(+)(out). Its function is as follows. NDH-1 shuttles electrons from NADH, via FMN and iron-sulfur (Fe-S) centers, to quinones in the respiratory chain. The immediate electron acceptor for the enzyme in this species is believed to be ubiquinone. Couples the redox reaction to proton translocation (for every two electrons transferred, four hydrogen ions are translocated across the cytoplasmic membrane), and thus conserves the redox energy in a proton gradient. This chain is NADH-quinone oxidoreductase subunit D, found in Methylorubrum extorquens (strain PA1) (Methylobacterium extorquens).